Reading from the N-terminus, the 175-residue chain is 3-hydroxydecanoyl-[acyl-carrier-protein] dehydratase (175 aa).

The active site involves His-74.

The protein belongs to the thioester dehydratase family. FabA subfamily. As to quaternary structure, homodimer.

The protein localises to the cytoplasm. The catalysed reaction is a (3R)-hydroxyacyl-[ACP] = a (2E)-enoyl-[ACP] + H2O. It carries out the reaction (3R)-hydroxydecanoyl-[ACP] = (2E)-decenoyl-[ACP] + H2O. The enzyme catalyses (2E)-decenoyl-[ACP] = (3Z)-decenoyl-[ACP]. It functions in the pathway lipid metabolism; fatty acid biosynthesis. Necessary for the introduction of cis unsaturation into fatty acids. Catalyzes the dehydration of (3R)-3-hydroxydecanoyl-ACP to E-(2)-decenoyl-ACP and then its isomerization to Z-(3)-decenoyl-ACP. Can catalyze the dehydratase reaction for beta-hydroxyacyl-ACPs with saturated chain lengths up to 16:0, being most active on intermediate chain length. This is 3-hydroxydecanoyl-[acyl-carrier-protein] dehydratase from Alcanivorax borkumensis (strain ATCC 700651 / DSM 11573 / NCIMB 13689 / SK2).